The primary structure comprises 366 residues: Peptide chain release factor 1 (366 aa).

Q239 carries the post-translational modification N5-methylglutamine.

The protein belongs to the prokaryotic/mitochondrial release factor family. Methylated by PrmC. Methylation increases the termination efficiency of RF1.

The protein localises to the cytoplasm. Peptide chain release factor 1 directs the termination of translation in response to the peptide chain termination codons UAG and UAA. In Albidiferax ferrireducens (strain ATCC BAA-621 / DSM 15236 / T118) (Rhodoferax ferrireducens), this protein is Peptide chain release factor 1.